A 247-amino-acid polypeptide reads, in one-letter code: Probable transcriptional regulatory protein Swit_2142 (247 aa).

The span at 1–14 (MAGHSKFKNIMHRK) shows a compositional bias: basic residues. The disordered stretch occupies residues 1–21 (MAGHSKFKNIMHRKGAQDKKR).

Belongs to the TACO1 family.

The protein localises to the cytoplasm. The polypeptide is Probable transcriptional regulatory protein Swit_2142 (Rhizorhabdus wittichii (strain DSM 6014 / CCUG 31198 / JCM 15750 / NBRC 105917 / EY 4224 / RW1) (Sphingomonas wittichii)).